We begin with the raw amino-acid sequence, 226 residues long: Lipoprotein-releasing system ATP-binding protein LolD 1 (226 aa).

The ABC transporter domain maps to 5–225; that stretch reads LKLDGIRKSY…IVRVVDGKIA (221 aa). 42 to 49 serves as a coordination point for ATP; that stretch reads GPSGSGKS.

It belongs to the ABC transporter superfamily. Lipoprotein translocase (TC 3.A.1.125) family. The complex is composed of two ATP-binding proteins (LolD) and two transmembrane proteins (LolC and LolE).

It is found in the cell inner membrane. Its function is as follows. Part of the ABC transporter complex LolCDE involved in the translocation of mature outer membrane-directed lipoproteins, from the inner membrane to the periplasmic chaperone, LolA. Responsible for the formation of the LolA-lipoprotein complex in an ATP-dependent manner. This chain is Lipoprotein-releasing system ATP-binding protein LolD 1, found in Rhodopseudomonas palustris (strain ATCC BAA-98 / CGA009).